We begin with the raw amino-acid sequence, 331 residues long: MHNHNNRLVITPGEPAGVGPDLAIALAQQDWPVELVVCADPALLLARASQLNLPLQLREYQADQPAIAQQAGSLTILPVKTAVNVVPGKLDVGNSHYVVETLAKACDGAISGEFAALVTGPVQKSIINDAGIPFIGHTEFFADRSHCQRVVMMLATEELRVALATTHLPLLAVPGAITQASLHEVITILDNDLKTKFGITQPQIYVCGLNPHAGEGGHMGHEEIDTIIPALNTLRQQGINLIGPLPADTLFQPKYLQHADAVLAMYHDQGLPVLKYQGFGRAVNITLGLPFIRTSVDHGTALELAATGTADVGSFITALNLAIKMINNSNE.

Substrate-binding residues include histidine 137 and threonine 138. Histidine 167, histidine 212, and histidine 267 together coordinate a divalent metal cation. The substrate site is built by lysine 275, asparagine 284, and arginine 293.

This sequence belongs to the PdxA family. In terms of assembly, homodimer. Zn(2+) serves as cofactor. The cofactor is Mg(2+). Co(2+) is required as a cofactor.

Its subcellular location is the cytoplasm. The catalysed reaction is 4-(phosphooxy)-L-threonine + NAD(+) = 3-amino-2-oxopropyl phosphate + CO2 + NADH. Its pathway is cofactor biosynthesis; pyridoxine 5'-phosphate biosynthesis; pyridoxine 5'-phosphate from D-erythrose 4-phosphate: step 4/5. Catalyzes the NAD(P)-dependent oxidation of 4-(phosphooxy)-L-threonine (HTP) into 2-amino-3-oxo-4-(phosphooxy)butyric acid which spontaneously decarboxylates to form 3-amino-2-oxopropyl phosphate (AHAP). This Yersinia pseudotuberculosis serotype I (strain IP32953) protein is 4-hydroxythreonine-4-phosphate dehydrogenase.